Here is an 867-residue protein sequence, read N- to C-terminus: DNA mismatch repair protein MutS (867 aa).

606–613 (GPNMSGKS) contributes to the ATP binding site.

It belongs to the DNA mismatch repair MutS family.

This protein is involved in the repair of mismatches in DNA. It is possible that it carries out the mismatch recognition step. This protein has a weak ATPase activity. The sequence is that of DNA mismatch repair protein MutS from Oceanobacillus iheyensis (strain DSM 14371 / CIP 107618 / JCM 11309 / KCTC 3954 / HTE831).